A 20-amino-acid chain; its full sequence is SPVAASYRATAGLAGKALDF.

In terms of domain architecture, Pentraxin (PTX) spans 1 to 20 (SPVAASYRATAGLAGKALDF).

This sequence belongs to the pentraxin family. In terms of assembly, homodimer; disulfide-linked. It is not known if it assembles into a pentraxin (or pentaxin) structure. Pentraxins have a discoid arrangement of 5 non-covalently bound subunits. Glycosylated.

It localises to the secreted. Displays several functions associated with host defense: it promotes agglutination, bacterial capsular swelling, phagocytosis, and complement fixation through its calcium-dependent binding to phosphorylcholine. This is C-reactive protein from Mustelus canis (Smooth dogfish).